The primary structure comprises 143 residues: MCYDFTGIIQHYRWRQLALHDSNLNVNLHIYIYITSSREKFVRIYMSCFHNLNTFNLKMVSLIDCSSSPIGSVFEPSYLAMSDLQVLLNISKCSLTMASKSIVSLTNSYSTKTSSVASKPHFFLNFWILLTSSLARPSLFSSE.

This is an uncharacterized protein from Saccharomyces cerevisiae (strain ATCC 204508 / S288c) (Baker's yeast).